The sequence spans 178 residues: Stathmin-2-A (178 aa).

Positions 38 to 178 constitute an SLD domain; the sequence is DDMEIKQLNK…RNKEQLELSG (141 aa). Positions 75-178 form a coiled coil; the sequence is KKKDVSLGEI…RNKEQLELSG (104 aa).

This sequence belongs to the stathmin family. Nervous tissue.

Its subcellular location is the cytoplasm. The protein localises to the membrane. The protein resides in the cell projection. It localises to the lamellipodium. The polypeptide is Stathmin-2-A (stmn2-a) (Xenopus laevis (African clawed frog)).